Here is a 61-residue protein sequence, read N- to C-terminus: Small ribosomal subunit protein uS14 (61 aa).

Zn(2+) is bound by residues Cys-24, Cys-27, Cys-40, and Cys-43.

This sequence belongs to the universal ribosomal protein uS14 family. Zinc-binding uS14 subfamily. Part of the 30S ribosomal subunit. Contacts proteins S3 and S10. Zn(2+) is required as a cofactor.

Its function is as follows. Binds 16S rRNA, required for the assembly of 30S particles and may also be responsible for determining the conformation of the 16S rRNA at the A site. This Geobacter sp. (strain M21) protein is Small ribosomal subunit protein uS14.